A 259-amino-acid polypeptide reads, in one-letter code: 3-oxo-5-alpha-steroid 4-dehydrogenase 1 (259 aa).

5 helical membrane-spanning segments follow: residues 12-29 (LLAA…AVFA), 86-106 (ILLA…PFLM), 111-131 (PMPL…GYLQ), 151-171 (FLIG…SDHI), and 209-229 (YALA…FCFL).

Belongs to the steroid 5-alpha reductase family. Liver and prostate (at a low level).

It localises to the microsome membrane. Its subcellular location is the endoplasmic reticulum membrane. It carries out the reaction a 3-oxo-5alpha-steroid + NADP(+) = a 3-oxo-Delta(4)-steroid + NADPH + H(+). The enzyme catalyses androst-4-ene-3,17-dione + NADPH + H(+) = 5alpha-androstan-3,17-dione + NADP(+). It catalyses the reaction 5alpha-pregnane-3,20-dione + NADP(+) = progesterone + NADPH + H(+). The catalysed reaction is 17beta-hydroxy-5alpha-androstan-3-one + NADP(+) = testosterone + NADPH + H(+). Converts testosterone into 5-alpha-dihydrotestosterone and progesterone or corticosterone into their corresponding 5-alpha-3-oxosteroids. It plays a central role in sexual differentiation and androgen physiology. This chain is 3-oxo-5-alpha-steroid 4-dehydrogenase 1, found in Homo sapiens (Human).